The chain runs to 555 residues: Meiotic mRNA stability protein kinase SSN3 (555 aa).

Residues 75 to 463 (YEVIGYIAAG…AFNALEHKYF (389 aa)) enclose the Protein kinase domain. 81–89 (IAAGTYGKV) is a binding site for ATP. Residues 100 to 138 (TNSANGSSLNGTNAKIPQFDSTQPKSSSSMDMQANTNAL) are compositionally biased toward polar residues. The tract at residues 100–166 (TNSANGSSLN…REDVSPHYNS (67 aa)) is disordered. Lys-183 serves as a coordination point for ATP. Residue Asp-286 is the Proton acceptor of the active site.

It belongs to the protein kinase superfamily. CMGC Ser/Thr protein kinase family. CDC2/CDKX subfamily. As to quaternary structure, component of the SRB8-11 complex which consists of SRB8, SSN2/SRB9, SSN3/SRB10 and SSN8/SRB11. The SRB8-11 complex associates with the Mediator complex. The SSN3/SRB10 and SSN8/SRB11 kinase-cyclin pair also associate with the RNA polymerase II holoenzyme. Interacts with TUP1.

Its subcellular location is the nucleus. It carries out the reaction L-seryl-[protein] + ATP = O-phospho-L-seryl-[protein] + ADP + H(+). The enzyme catalyses L-threonyl-[protein] + ATP = O-phospho-L-threonyl-[protein] + ADP + H(+). It catalyses the reaction [DNA-directed RNA polymerase] + ATP = phospho-[DNA-directed RNA polymerase] + ADP + H(+). Functionally, component of the SRB8-11 complex. The SRB8-11 complex is a regulatory module of the Mediator complex which is itself involved in regulation of basal and activated RNA polymerase II-dependent transcription. The SRB8-11 complex may be involved in the transcriptional repression of a subset of genes regulated by Mediator. It may inhibit the association of the Mediator complex with RNA polymerase II to form the holoenzyme complex. The SRB8-11 complex phosphorylates the C-terminal domain (CTD) of the largest subunit of RNA polymerase II RPB1 at serines 2 and 5. The SSN3/SRB10 and SSN8/SRB11 kinase-cyclin pair may also positively and negatively regulate numerous transcriptional activators in response to changes in nutritional and physiological conditions. Phosphorylates GCN4, promoting its ubiquitin-mediated degradation, and MSN2, promoting its nuclear exclusion. Phosphorylates STE12, thereby promoting its degradation and inhibition of filamentous growth. Phosphorylates GAL4, and this phosphorylation is required for efficient galactose-inducible transcription. Also phosphorylates BDF1 and the TAF2 subunit of the TFIID complex. The protein is Meiotic mRNA stability protein kinase SSN3 (SSN3) of Saccharomyces cerevisiae (strain ATCC 204508 / S288c) (Baker's yeast).